A 585-amino-acid polypeptide reads, in one-letter code: MNYKKNSLIKTGAFALIDMLVKHKVKNIFGYPGGAILPIYDELYHWEKKKLIKHYLVRHEQSAAHAADAYARATNEVGVCLATSGPGATNLVTGIATAQMDSVPIIAITGQVSRAFIGTDAFQEVDIFGITLPIVKHSFVVRDPRDISTIVSEAFYISKHGRPGAVLIDVPKDVGLEEFNYHDYDSIRDHKPITKYRPIYGPSIRQIEKFKKMLLESKQPILYVGGGAVMSRAQHEIEELASFIKIPVTTTLMGKGSFNEYNPLYLGMLGMHGTAYANFAVSECDLLIALGARFDDRVTGKLDEFACNAQVIHVDIDPAEIGKNRIPQLAIISDIKIVLKELLSSMKEGTNNMDKNQTQAWLHRIHKWKKEYPLSIPHDSKLLYPQEVINEISQIAQKAFFATDVGQHQMWAAQFLKVEQGKWLSSSGLGTMGYGLPAAIGAKIANPNDLIICITGDASFQMNLQELGTIAQYELDIKIFIINNQWQGMVRQWQQAFYDQRYAHSNMAKGQPDFVQLANSYGIRGIRVTTSKDLKSKIERIISTPGPLLIDCIVATSENCYPMIAPGKSNSQMLGLTKQLKTITN.

Glu-60 serves as a coordination point for thiamine diphosphate. Residues Arg-162, 272–293, and 315–334 each bind FAD; these read HGTAYANFAVSECDLLIALGAR and DIDPAEIGKNRIPQLAIISD. The segment at 407–486 is thiamine pyrophosphate binding; it reads QHQMWAAQFL…IKIFIINNQW (80 aa). Residues Asp-457 and Asn-484 each coordinate Mg(2+).

This sequence belongs to the TPP enzyme family. In terms of assembly, dimer of large and small chains. Mg(2+) is required as a cofactor. The cofactor is thiamine diphosphate.

It localises to the plastid. The protein resides in the chloroplast. It catalyses the reaction 2 pyruvate + H(+) = (2S)-2-acetolactate + CO2. Its pathway is amino-acid biosynthesis; L-isoleucine biosynthesis; L-isoleucine from 2-oxobutanoate: step 1/4. It participates in amino-acid biosynthesis; L-valine biosynthesis; L-valine from pyruvate: step 1/4. The chain is Acetolactate synthase large subunit (ilvB) from Cyanidium caldarium (Red alga).